The primary structure comprises 171 residues: MIDRATLEQRVSAQFPTVRIGDESGDLCLTVERQQLPALAGWLRDEPDLAFTFLNQLCGVDYLGRDPRFEVVVHLTSFQNKMRVTLHIEVPEADPTIPTLARLFPTANFQERETYDMFGIIFTGHPGLERILMPEDWLGHPQRKDHPLGYEEVAFTHNEDWIYANKPFAKE.

The protein belongs to the complex I 30 kDa subunit family. NDH-1 is composed of 14 different subunits. Subunits NuoB, C, D, E, F, and G constitute the peripheral sector of the complex.

It localises to the cell membrane. The enzyme catalyses a quinone + NADH + 5 H(+)(in) = a quinol + NAD(+) + 4 H(+)(out). NDH-1 shuttles electrons from NADH, via FMN and iron-sulfur (Fe-S) centers, to quinones in the respiratory chain. The immediate electron acceptor for the enzyme in this species is believed to be ubiquinone. Couples the redox reaction to proton translocation (for every two electrons transferred, four hydrogen ions are translocated across the cytoplasmic membrane), and thus conserves the redox energy in a proton gradient. The polypeptide is NADH-quinone oxidoreductase subunit C (Herpetosiphon aurantiacus (strain ATCC 23779 / DSM 785 / 114-95)).